The sequence spans 400 residues: Lysophospholipid transporter LplT (400 aa).

Transmembrane regions (helical) follow at residues 19–39, 53–73, 91–111, 139–159, 164–184, 195–213, 227–247, 257–277, 281–301, 304–324, 352–372, and 373–393; these read VIVA…ATLA, VLQM…GQIA, AGAA…LVGI, LMEA…GVLA, IAAL…NLFI, SWRL…VVLW, LFWG…PVAL, YLNA…AKLV, TVSR…IFSL, ALLP…FFVV, NSAM…GVPA, and VAIG…LWIW.

Belongs to the major facilitator superfamily. LplT (TC 2.A.1.42) family.

The protein localises to the cell inner membrane. In terms of biological role, catalyzes the facilitated diffusion of 2-acyl-glycero-3-phosphoethanolamine (2-acyl-GPE) into the cell. The sequence is that of Lysophospholipid transporter LplT from Salmonella heidelberg (strain SL476).